Reading from the N-terminus, the 98-residue chain is NADH-ubiquinone oxidoreductase chain 4L (98 aa).

Helical transmembrane passes span 1-21 (MEQINLNMITAFTIALMGVLT), 28-48 (STLLCLEGMMLSLFILMVLLI), and 61-81 (LILLVFSACEAGVGLALLVTI).

This sequence belongs to the complex I subunit 4L family. In terms of assembly, core subunit of respiratory chain NADH dehydrogenase (Complex I) which is composed of 45 different subunits.

Its subcellular location is the mitochondrion inner membrane. It catalyses the reaction a ubiquinone + NADH + 5 H(+)(in) = a ubiquinol + NAD(+) + 4 H(+)(out). Functionally, core subunit of the mitochondrial membrane respiratory chain NADH dehydrogenase (Complex I) which catalyzes electron transfer from NADH through the respiratory chain, using ubiquinone as an electron acceptor. Part of the enzyme membrane arm which is embedded in the lipid bilayer and involved in proton translocation. The polypeptide is NADH-ubiquinone oxidoreductase chain 4L (MT-ND4L) (Monodelphis domestica (Gray short-tailed opossum)).